A 362-amino-acid polypeptide reads, in one-letter code: Sulfoquinovose monooxygenase (362 aa).

It belongs to the SsuD family.

It carries out the reaction 6-sulfo-D-quinovose + FMNH2 + O2 = 6-dehydro-D-glucose + FMN + sulfite + H2O + 2 H(+). In terms of biological role, part of the alkanesulfonate monooxygenase (sulfo-ASMO) pathway, a D-sulfoquinovose degradation pathway that enables the complete utilization of all carbons within sulfoquinovose (SQ) with concomitant production of inorganic sulfite. Catalyzes the oxidative desulfurization of sulfoquinovose to sulfite and 6-dehydro-D-glucose. This chain is Sulfoquinovose monooxygenase, found in Novosphingobium aromaticivorans (strain ATCC 700278 / DSM 12444 / CCUG 56034 / CIP 105152 / NBRC 16084 / F199).